A 585-amino-acid polypeptide reads, in one-letter code: Trehalase (585 aa).

An N-terminal signal peptide occupies residues 1-32 (MAKTTPMAKPSVGLLTLQVLVFCALTGSLASA). Residues arginine 184 and 191–192 (WD) contribute to the substrate site. N-linked (GlcNAc...) asparagine glycosylation is present at asparagine 207. Substrate contacts are provided by residues asparagine 228, 237 to 239 (RSQ), 302 to 304 (RPE), and glycine 336. Aspartate 338 serves as the catalytic Proton donor/acceptor. An N-linked (GlcNAc...) asparagine glycan is attached at asparagine 348. The Proton donor/acceptor role is filled by glutamate 535. Glutamate 550 contributes to the substrate binding site.

It belongs to the glycosyl hydrolase 37 family. In terms of tissue distribution, expressed by the venom gland.

Its subcellular location is the secreted. It catalyses the reaction alpha,alpha-trehalose + H2O = alpha-D-glucose + beta-D-glucose. This Pimpla hypochondriaca (Parasitoid wasp) protein is Trehalase (tre1).